The sequence spans 209 residues: ATP synthase subunit b', chloroplastic (209 aa).

Residues 1-62 (MASLLARPQQ…NALMAMPAAA (62 aa)) constitute a chloroplast transit peptide. A helical membrane pass occupies residues 67–87 (IFDFNLTLPVMAGEFLLLMVF).

Belongs to the ATPase B chain family. In terms of assembly, F-type ATPases have 2 components, F(1) - the catalytic core - and F(0) - the membrane proton channel. F(1) has five subunits: alpha(3), beta(3), gamma(1), delta(1), epsilon(1). F(0) has four main subunits: a(1), b(1), b'(1) and c(10-14). The alpha and beta chains form an alternating ring which encloses part of the gamma chain. F(1) is attached to F(0) by a central stalk formed by the gamma and epsilon chains, while a peripheral stalk is formed by the delta, b and b' chains.

Its subcellular location is the plastid. It localises to the chloroplast thylakoid membrane. Its function is as follows. F(1)F(0) ATP synthase produces ATP from ADP in the presence of a proton or sodium gradient. F-type ATPases consist of two structural domains, F(1) containing the extramembraneous catalytic core and F(0) containing the membrane proton channel, linked together by a central stalk and a peripheral stalk. During catalysis, ATP synthesis in the catalytic domain of F(1) is coupled via a rotary mechanism of the central stalk subunits to proton translocation. Functionally, component of the F(0) channel, it forms part of the peripheral stalk, linking F(1) to F(0). The b'-subunit is a diverged and duplicated form of b found in plants and photosynthetic bacteria. This Chlamydomonas reinhardtii (Chlamydomonas smithii) protein is ATP synthase subunit b', chloroplastic.